Here is a 197-residue protein sequence, read N- to C-terminus: 3-isopropylmalate dehydratase small subunit (197 aa).

This sequence belongs to the LeuD family. LeuD type 1 subfamily. As to quaternary structure, heterodimer of LeuC and LeuD.

The enzyme catalyses (2R,3S)-3-isopropylmalate = (2S)-2-isopropylmalate. It functions in the pathway amino-acid biosynthesis; L-leucine biosynthesis; L-leucine from 3-methyl-2-oxobutanoate: step 2/4. Functionally, catalyzes the isomerization between 2-isopropylmalate and 3-isopropylmalate, via the formation of 2-isopropylmaleate. In Streptomyces griseus subsp. griseus (strain JCM 4626 / CBS 651.72 / NBRC 13350 / KCC S-0626 / ISP 5235), this protein is 3-isopropylmalate dehydratase small subunit.